The primary structure comprises 218 residues: Peroxiredoxin-like 2A (218 aa).

Positions 3–101 are thioredoxin-like fold; that stretch reads MWSIGVGAVG…DELGVPLYAV (99 aa). Active-site redox-active residues include cysteine 74 and cysteine 77.

It belongs to the peroxiredoxin-like PRXL2 family. PRXL2A subfamily. As to expression, expressed in kidney, liver, skin, and brain. Widely expressed with highest levels detected in adipose tissue.

The protein localises to the cytoplasm. It is found in the secreted. In terms of biological role, involved in redox regulation of the cell. Acts as an antioxidant. Inhibits TNFSF11-induced NFKB1 and JUN activation and osteoclast differentiation. May affect bone resorption and help to maintain bone mass. Acts as a negative regulator of macrophage-mediated inflammation by inhibiting macrophage production of inflammatory cytokines, probably through suppression of the MAPK signaling pathway. The chain is Peroxiredoxin-like 2A (Prxl2a) from Mus musculus (Mouse).